Reading from the N-terminus, the 43-residue chain is Omega-ctenitoxin-Pr1a (43 aa).

4 disulfides stabilise this stretch: Cys2–Cys17, Cys9–Cys22, Cys16–Cys33, and Cys24–Cys31. At Gly43 the chain carries Glycine amide.

Expressed by the venom gland.

It localises to the secreted. Its function is as follows. Inhibits high-voltage activated calcium channels. Shifts the voltage-dependence for activation towards hyperpolarized membrane potentials for L- (Cav1), P/Q- (Cav2.1/CACNA1A) and R-type (Cav2.3/CACNA1E) calcium currents. Causes immediate agitation and clockwise gyration, followed by the gradual development of general flaccid paralysis when injected intracerebroventricular into mice at dose levels of 5 ug per mouse. The chain is Omega-ctenitoxin-Pr1a from Phoneutria reidyi (Brazilian Amazonian armed spider).